We begin with the raw amino-acid sequence, 128 residues long: 2-iminobutanoate/2-iminopropanoate deaminase (128 aa).

Substrate is bound at residue Arg-105.

Belongs to the RutC family. Homotrimer.

The protein localises to the cytoplasm. It carries out the reaction 2-iminobutanoate + H2O = 2-oxobutanoate + NH4(+). It catalyses the reaction 2-iminopropanoate + H2O = pyruvate + NH4(+). The protein operates within amino-acid biosynthesis; L-isoleucine biosynthesis; 2-oxobutanoate from L-threonine. Accelerates the release of ammonia from reactive enamine/imine intermediates of the PLP-dependent threonine dehydratase (IlvA) in the low water environment of the cell. It catalyzes the deamination of enamine/imine intermediates to yield 2-ketobutyrate and ammonia. It is required for the detoxification of reactive intermediates of IlvA due to their highly nucleophilic abilities and to avoid they are captured by anthranilate phosphoribosyltransferase (TrpD) to generate PRA, an intermediate in the alternative pyrimidine biosynthetic (APB) pathway. Also required for full activity of IlvE which is involved in the isoleucine biosynthesis. RidA also accelerates the release of pyruvate produced by IlvA from L-serine. In Salmonella typhimurium (strain LT2 / SGSC1412 / ATCC 700720), this protein is 2-iminobutanoate/2-iminopropanoate deaminase.